A 120-amino-acid chain; its full sequence is MDPRKLLSCSSSYVSVRMKEEKGTIRCCSECKTTKTPMWRGGPTGPKSLCNACGIRHRKQRRSELLGIHIIRSHKSLASKKINLLSSSHGGVAVKKRRSLKEEEQAALCLLLLSCSSVLA.

The GATA-type zinc finger occupies lysine 22–serine 76.

The protein belongs to the type IV zinc-finger family. Class B subfamily.

The protein resides in the nucleus. Transcriptional regulator that specifically binds 5'-GATA-3' or 5'-GAT-3' motifs within gene promoters. The polypeptide is GATA transcription factor 23 (GATA23) (Arabidopsis thaliana (Mouse-ear cress)).